Consider the following 366-residue polypeptide: 4-hydroxy-3-methylbut-2-en-1-yl diphosphate synthase (flavodoxin) (366 aa).

Cys270, Cys273, Cys305, and Glu312 together coordinate [4Fe-4S] cluster.

It belongs to the IspG family. Requires [4Fe-4S] cluster as cofactor.

It catalyses the reaction (2E)-4-hydroxy-3-methylbut-2-enyl diphosphate + oxidized [flavodoxin] + H2O + 2 H(+) = 2-C-methyl-D-erythritol 2,4-cyclic diphosphate + reduced [flavodoxin]. The protein operates within isoprenoid biosynthesis; isopentenyl diphosphate biosynthesis via DXP pathway; isopentenyl diphosphate from 1-deoxy-D-xylulose 5-phosphate: step 5/6. Converts 2C-methyl-D-erythritol 2,4-cyclodiphosphate (ME-2,4cPP) into 1-hydroxy-2-methyl-2-(E)-butenyl 4-diphosphate. The polypeptide is 4-hydroxy-3-methylbut-2-en-1-yl diphosphate synthase (flavodoxin) (Wigglesworthia glossinidia brevipalpis).